The primary structure comprises 239 residues: Sugar fermentation stimulation protein homolog (239 aa).

This sequence belongs to the SfsA family.

The polypeptide is Sugar fermentation stimulation protein homolog (Sinorhizobium medicae (strain WSM419) (Ensifer medicae)).